The chain runs to 497 residues: MTSVKLSTPQTGEFEQPTGLFINNEFVKAVDGKTFDVINPSTEEVICSVQEATEKDVDIAVAAARKAFNGPWRKETPENRGKLLNKLADLFEKNADLIAAVEALDNGKAFSMAKNVDVPAAAGCLRYYGGWADKIEGKVVDTAPDSFNYIRKEPIGVCGQIIPWNFPILMWSWKIGPAIATGNTVVLKTAEQTPLSAYIACKLIQEAGFPPGVINVITGFGKIAGAAMSAHMDIDKIAFTGSTVVGRQIMKSAAGSNLKKVTLELGGKSPNIVFADADLDEAIHWVNFGIYFNHGQACCAGSRIYVQEEIYDKFIQRFKERAAQNAVGDPFAADTFQGPQVSQLQFDRIMGYIEEGKKSGATIETGGNRKGDKGYFIEPTIFSNVTEDMKIQQEEIFGPVCTISKFKTKADVIKIGNNTTYGLAAAVHTSNLTTAIEVANALRAGTVWVNSYNTLHWQLPFGGYKESGIGRELGEAALDNYIQTKTVSIRLGDVLFG.

Residue G241–G246 coordinates NAD(+). E264 acts as the Proton acceptor in catalysis. C298 acts as the Nucleophile in catalysis.

Belongs to the aldehyde dehydrogenase family.

It localises to the cytoplasm. It carries out the reaction an aldehyde + NAD(+) + H2O = a carboxylate + NADH + 2 H(+). It participates in alcohol metabolism; ethanol degradation; acetate from ethanol: step 2/2. The chain is Aldehyde dehydrogenase (ALTA10) from Alternaria alternata (Alternaria rot fungus).